The primary structure comprises 259 residues: Phosphate import ATP-binding protein PstB (259 aa).

One can recognise an ABC transporter domain in the interval 5 to 248; that stretch reads IDVSGLHVYY…NKIFTKPEKK (244 aa). 37-44 contacts ATP; sequence GSSGCGKS.

It belongs to the ABC transporter superfamily. Phosphate importer (TC 3.A.1.7) family. The complex is composed of two ATP-binding proteins (PstB), two transmembrane proteins (PstC and PstA) and a solute-binding protein (PstS).

The protein resides in the cell membrane. The enzyme catalyses phosphate(out) + ATP + H2O = ADP + 2 phosphate(in) + H(+). Part of the ABC transporter complex PstSACB involved in phosphate import. Responsible for energy coupling to the transport system. This Thermobifida fusca (strain YX) protein is Phosphate import ATP-binding protein PstB.